The chain runs to 168 residues: Fusaric acid resistance protein FusE (168 aa).

Involved in the resistance (detoxification) of the fungal toxin fusaric acid. The chain is Fusaric acid resistance protein FusE (fusE) from Burkholderia cepacia (Pseudomonas cepacia).